Consider the following 130-residue polypeptide: Cystatin (130 aa).

The first 19 residues, 1–19 (MEWKIVVPLFAVAFTVANA), serve as a signal peptide directing secretion. The Secondary area of contact signature appears at 67–71 (QVVSG). Intrachain disulfides connect Cys-85/Cys-94 and Cys-108/Cys-128.

It belongs to the cystatin family.

It is found in the secreted. Functionally, cysteine proteinase inhibitor. The sequence is that of Cystatin from Oncorhynchus mykiss (Rainbow trout).